The following is a 132-amino-acid chain: Insulin-like 3 (132 aa).

The N-terminal stretch at 1 to 24 (MSPRPLAWALVLLGAALAVALALG) is a signal peptide. Cystine bridges form between C36-C117, C48-C130, and C116-C121. Residues 61–104 (VAGGDRELLQWLEGRHLHGQVSDGDPMLVLVPQALPQASLHHHH) constitute a propeptide, c peptide like.

The protein belongs to the insulin family. In terms of assembly, heterodimer of a B chain and an A chain linked by two disulfide bonds. As to expression, more strongly expressed in testis than in ovary.

It localises to the secreted. In terms of biological role, seems to play a role in testicular function. May be a trophic hormone with a role in testicular descent in fetal life. Is a ligand for LGR8 receptor. The sequence is that of Insulin-like 3 (INSL3) from Canis lupus familiaris (Dog).